Consider the following 80-residue polypeptide: Penaeidin-3 (80 aa).

Positions 1-19 (MRLVVCLVYLVSFALVCQG) are cleaved as a signal peptide. Position 20 is a pyrrolidone carboxylic acid (Gln20). Disulfide bonds link Cys54–Cys67, Cys57–Cys74, and Cys68–Cys75.

The protein belongs to the penaeidin family. The N-terminus forms pyrrolidone carboxylic acid. As to expression, strongly expressed in hemocytes, and to a lesser extent in heart, muscle, gills, intestine and eyestalk. Lowest expression in hepatopancreas.

It localises to the cytoplasmic granule. Its function is as follows. Antibacterial and antifungal activity. Presents chitin-binding activity. The sequence is that of Penaeidin-3 from Penaeus indicus (Indian white prawn).